The following is a 431-amino-acid chain: Enolase (431 aa).

Gln-167 contacts (2R)-2-phosphoglycerate. The Proton donor role is filled by Glu-209. 3 residues coordinate Mg(2+): Asp-246, Glu-289, and Asp-316. (2R)-2-phosphoglycerate is bound by residues Lys-341, Arg-370, Ser-371, and Lys-392. The active-site Proton acceptor is Lys-341.

Belongs to the enolase family. In terms of assembly, component of the RNA degradosome, a multiprotein complex involved in RNA processing and mRNA degradation. Mg(2+) serves as cofactor.

The protein resides in the cytoplasm. It is found in the secreted. The protein localises to the cell surface. The catalysed reaction is (2R)-2-phosphoglycerate = phosphoenolpyruvate + H2O. It functions in the pathway carbohydrate degradation; glycolysis; pyruvate from D-glyceraldehyde 3-phosphate: step 4/5. Its function is as follows. Catalyzes the reversible conversion of 2-phosphoglycerate (2-PG) into phosphoenolpyruvate (PEP). It is essential for the degradation of carbohydrates via glycolysis. The chain is Enolase from Shewanella putrefaciens (strain CN-32 / ATCC BAA-453).